The sequence spans 516 residues: L-amino acid oxidase bordonein-L (516 aa).

The N-terminal stretch at 1-18 (MNVFFMFSLLFLAALGSC) is a signal peptide. Cysteines 28 and 189 form a disulfide. FAD is bound by residues 61–62 (MA), 81–82 (EA), Arg-89, and 103–106 (GPMR). Substrate is bound by residues Arg-106 and His-239. Val-279 lines the FAD pocket. A disulfide bridge connects residues Cys-349 and Cys-430. Asn-379 carries N-linked (GlcNAc...) asparagine glycosylation. Tyr-390 provides a ligand contact to substrate. Residues Glu-475 and 482–487 (GWIDST) each bind FAD. 482–483 (GW) contacts substrate.

Homodimer; non-covalently linked. Requires FAD as cofactor. Post-translationally, N-glycosylated. N-glycan probably consists of the disaccharide N-acetylglucosamine-fucose (HexNAc-Fuc). As to expression, expressed by the venom gland.

The protein localises to the secreted. The enzyme catalyses an L-alpha-amino acid + O2 + H2O = a 2-oxocarboxylate + H2O2 + NH4(+). It catalyses the reaction L-leucine + O2 + H2O = 4-methyl-2-oxopentanoate + H2O2 + NH4(+). It carries out the reaction L-phenylalanine + O2 + H2O = 3-phenylpyruvate + H2O2 + NH4(+). The catalysed reaction is L-tryptophan + O2 + H2O = indole-3-pyruvate + H2O2 + NH4(+). The enzyme catalyses L-methionine + O2 + H2O = 4-methylsulfanyl-2-oxobutanoate + H2O2 + NH4(+). It catalyses the reaction L-isoleucine + O2 + H2O = (S)-3-methyl-2-oxopentanoate + H2O2 + NH4(+). It carries out the reaction L-arginine + O2 + H2O = 5-guanidino-2-oxopentanoate + H2O2 + NH4(+). The catalysed reaction is L-histidine + O2 + H2O = 3-(imidazol-5-yl)pyruvate + H2O2 + NH4(+). In terms of biological role, catalyzes an oxidative deamination of predominantly hydrophobic and aromatic L-amino acids, thus producing hydrogen peroxide that may contribute to the diverse toxic effects of this enzyme. Is highly active on L-Met, L-Leu, L-Trp, and L-Phe, moderately active on L-Ile, L-His, and L-Arg, and weakly or not active on L-Gln, L-Val, L-Asn, L-Ala, L-Lys, L-Ser, L-Thr, L-Pro, L-Asp, L-Gly, L-Tyr, L-Cys and L-Glu. This enzyme exhibits diverse biological activities, such as hemorrhage, hemolysis, edema, apoptosis of vascular endothelial cells or tumor cell lines, antibacterial and antiparasitic activities, as well as regulation of platelet aggregation. Its effect on platelets is controversial, since it either induces aggregation or inhibits agonist-induced aggregation. These different effects are probably due to different experimental conditions. In vitro, the enzyme exhibits cytotoxicity against fibroblast cell line and kills Leishmania amazonensis promastigotes, intensified by substrate addition. The polypeptide is L-amino acid oxidase bordonein-L (Crotalus durissus terrificus (South American rattlesnake)).